The following is a 594-amino-acid chain: Probable methylenetetrahydrofolate reductase (NADH) (594 aa).

E21 (proton donor/acceptor) is an active-site residue. NAD(+) contacts are provided by residues 21–26 and 52–53; these read EYFPPK and TW. Residues 52-53, H81, 111-113, Y153, 157-160, D175, and K182 contribute to the FAD site; these read TW, RGD, and HPDA. D113 is a binding site for substrate. The substrate site is built by Q193 and Y285.

It belongs to the methylenetetrahydrofolate reductase family. Homodimer. It depends on FAD as a cofactor.

The enzyme catalyses (6S)-5-methyl-5,6,7,8-tetrahydrofolate + NAD(+) = (6R)-5,10-methylene-5,6,7,8-tetrahydrofolate + NADH + H(+). It participates in one-carbon metabolism; tetrahydrofolate interconversion. Plant MTHFRs strongly prefer NADH over NADPH. Not inhibited by methionine or S-adenosylmethionine. In terms of biological role, the probable reversibility of the MTHFR reaction in plants suggests that they can metabolize the methyl group of 5,10-methylenetetrahydrofolate to serine, sugars and starch. In Oryza sativa subsp. japonica (Rice), this protein is Probable methylenetetrahydrofolate reductase (NADH).